The following is a 225-amino-acid chain: Octanoyltransferase (225 aa).

The BPL/LPL catalytic domain occupies 43-225 (GTAPELVWLL…KTFRDVFGRG (183 aa)). Substrate-binding positions include 82–89 (RGGQYTYH), 157–159 (AIG), and 170–172 (GVS). C188 serves as the catalytic Acyl-thioester intermediate.

It belongs to the LipB family.

The protein localises to the cytoplasm. The enzyme catalyses octanoyl-[ACP] + L-lysyl-[protein] = N(6)-octanoyl-L-lysyl-[protein] + holo-[ACP] + H(+). It participates in protein modification; protein lipoylation via endogenous pathway; protein N(6)-(lipoyl)lysine from octanoyl-[acyl-carrier-protein]: step 1/2. In terms of biological role, catalyzes the transfer of endogenously produced octanoic acid from octanoyl-acyl-carrier-protein onto the lipoyl domains of lipoate-dependent enzymes. Lipoyl-ACP can also act as a substrate although octanoyl-ACP is likely to be the physiological substrate. The protein is Octanoyltransferase of Parvibaculum lavamentivorans (strain DS-1 / DSM 13023 / NCIMB 13966).